A 328-amino-acid chain; its full sequence is Interleukin-12 subunit beta (328 aa).

The signal sequence occupies residues 1-22; it reads MCHQQLVISWFSLVFLASPLMA. Residues 29–106 form the Ig-like C2-type domain; that stretch reads DVYVVELDWY…LSHSLLLLHK (78 aa). A disulfide bridge connects residues C50 and C90. N-linked (GlcNAc...) asparagine glycosylation is found at N125, N135, and N222. The 92-residue stretch at 237–328 folds into the Fibronectin type-III domain; that stretch reads PPKNLQLKPL…WSEWASVPCS (92 aa).

The protein belongs to the IL-12B family. In terms of assembly, heterodimer with IL12A; disulfide-linked. The heterodimer is known as interleukin IL-12. Heterodimer with IL23A; disulfide-linked. The heterodimer is known as interleukin IL-23. Also secreted as a monomer. Interacts with NBR1; this interaction promotes IL-12 secretion.

It is found in the secreted. Cytokine that can act as a growth factor for activated T and NK cells, enhance the lytic activity of NK/lymphokine-activated killer cells, and stimulate the production of IFN-gamma by resting PBMC. In terms of biological role, associates with IL23A to form the IL-23 interleukin, a heterodimeric cytokine which functions in innate and adaptive immunity. IL-23 may constitute with IL-17 an acute response to infection in peripheral tissues. IL-23 binds to a heterodimeric receptor complex composed of IL12RB1 and IL23R, activates the Jak-Stat signaling cascade, stimulates memory rather than naive T-cells and promotes production of pro-inflammatory cytokines. IL-23 induces autoimmune inflammation and thus may be responsible for autoimmune inflammatory diseases and may be important for tumorigenesis. This is Interleukin-12 subunit beta (IL12B) from Macaca mulatta (Rhesus macaque).